The sequence spans 159 residues: 2-C-methyl-D-erythritol 2,4-cyclodiphosphate synthase (159 aa).

A divalent metal cation is bound by residues D8 and H10. 4-CDP-2-C-methyl-D-erythritol 2-phosphate-binding positions include 8 to 10 (DVH) and 34 to 35 (HS). H42 lines the a divalent metal cation pocket. 4-CDP-2-C-methyl-D-erythritol 2-phosphate is bound by residues 56-58 (DIG), 100-106 (AQAPKMA), 132-135 (TTTE), F139, and R142.

It belongs to the IspF family. In terms of assembly, homotrimer. The cofactor is a divalent metal cation.

The catalysed reaction is 4-CDP-2-C-methyl-D-erythritol 2-phosphate = 2-C-methyl-D-erythritol 2,4-cyclic diphosphate + CMP. The protein operates within isoprenoid biosynthesis; isopentenyl diphosphate biosynthesis via DXP pathway; isopentenyl diphosphate from 1-deoxy-D-xylulose 5-phosphate: step 4/6. In terms of biological role, involved in the biosynthesis of isopentenyl diphosphate (IPP) and dimethylallyl diphosphate (DMAPP), two major building blocks of isoprenoid compounds. Catalyzes the conversion of 4-diphosphocytidyl-2-C-methyl-D-erythritol 2-phosphate (CDP-ME2P) to 2-C-methyl-D-erythritol 2,4-cyclodiphosphate (ME-CPP) with a corresponding release of cytidine 5-monophosphate (CMP). The protein is 2-C-methyl-D-erythritol 2,4-cyclodiphosphate synthase of Marinobacter nauticus (strain ATCC 700491 / DSM 11845 / VT8) (Marinobacter aquaeolei).